A 92-amino-acid polypeptide reads, in one-letter code: Small ribosomal subunit protein uS19c (92 aa).

The protein belongs to the universal ribosomal protein uS19 family.

The protein resides in the plastid. Its subcellular location is the chloroplast. Functionally, protein S19 forms a complex with S13 that binds strongly to the 16S ribosomal RNA. The chain is Small ribosomal subunit protein uS19c from Chlorokybus atmophyticus (Soil alga).